The primary structure comprises 230 residues: Cytidylate kinase (230 aa).

Position 12-20 (12-20) interacts with ATP; that stretch reads GPSGAGKGT.

It belongs to the cytidylate kinase family. Type 1 subfamily.

It is found in the cytoplasm. It carries out the reaction CMP + ATP = CDP + ADP. It catalyses the reaction dCMP + ATP = dCDP + ADP. This chain is Cytidylate kinase, found in Shewanella putrefaciens (strain CN-32 / ATCC BAA-453).